A 341-amino-acid chain; its full sequence is L-threonine 3-dehydrogenase (341 aa).

Cys38 provides a ligand contact to Zn(2+). Catalysis depends on charge relay system residues Thr40 and His43. Zn(2+) is bound by residues His63, Glu64, Cys93, Cys96, Cys99, and Cys107. Residues Ile175, Asp195, Arg200, 262 to 264, and 286 to 287 contribute to the NAD(+) site; these read LGI and IY.

The protein belongs to the zinc-containing alcohol dehydrogenase family. Homotetramer. Requires Zn(2+) as cofactor.

It is found in the cytoplasm. The catalysed reaction is L-threonine + NAD(+) = (2S)-2-amino-3-oxobutanoate + NADH + H(+). It functions in the pathway amino-acid degradation; L-threonine degradation via oxydo-reductase pathway; glycine from L-threonine: step 1/2. Catalyzes the NAD(+)-dependent oxidation of L-threonine to 2-amino-3-ketobutyrate. The polypeptide is L-threonine 3-dehydrogenase (Shigella dysenteriae serotype 1 (strain Sd197)).